We begin with the raw amino-acid sequence, 131 residues long: uncharacterized protein (131 aa).

This is an uncharacterized protein from Orgyia pseudotsugata multicapsid polyhedrosis virus (OpMNPV).